Consider the following 405-residue polypeptide: MLAVGATLCLLSFLTGATGRLAPDDLCYAEPRKTGPMPRSKPKHQPLLFEAPKVALTAESKGCQLILLDPPIDMGYRLEDKINASIAWFFDFGNCRMPIAYREYYDCVGNAIPSPETCDGYSFTLVKTEGVVEFTIVNMSLLLQPGIYDSGSFIYSALLDMDVLTGRVILNVENDTNYPCGMTHGLTADGNINVDETTHTTPHPRAVGCFPELINFDAWENVTFEEMGIPDPNSFLDDESDYPNTMDCYSWDLYTYPKSLKQAEGPQTLLIGAVGLRILAQAWKFVENETYSQHTRTYTRDAKEVDVTQPSPVQADSVLAKKRTSMKNNPIYSEGKPHAKPFSTIDSIHTEGMKNNPVYSESLMLNVQHSDSITTGGVLHGLQDCDNQLKTVYICLALIGLAHVP.

The N-terminal stretch at 1–19 (MLAVGATLCLLSFLTGATG) is a signal peptide. N-linked (GlcNAc...) asparagine; by host glycans are attached at residues N83, N138, N174, N221, and N288. Residues 389–405 (LKTVYICLALIGLAHVP) traverse the membrane as a helical segment.

The protein belongs to the alphaherpesvirinae glycoprotein G family.

The protein localises to the virion membrane. In terms of biological role, chemokine-binding protein that inhibits neutrophils' chemotaxis. This chain is Envelope glycoprotein G (gG), found in Equine herpesvirus 4 (strain 1942) (EHV-4).